We begin with the raw amino-acid sequence, 119 residues long: Protein Wnt-4 (119 aa).

S1 carries the O-palmitoleoyl serine; by PORCN lipid modification. Intrachain disulfides connect C69/C100 and C85/C95. A glycan (N-linked (GlcNAc...) asparagine) is linked at N86.

Belongs to the Wnt family. Palmitoleoylation is required for efficient binding to frizzled receptors. Depalmitoleoylation leads to Wnt signaling pathway inhibition.

It localises to the secreted. The protein localises to the extracellular space. The protein resides in the extracellular matrix. Its function is as follows. Ligand for members of the frizzled family of seven transmembrane receptors. Plays an important role in embryonic development. This Sceloporus occidentalis (Western fence lizard) protein is Protein Wnt-4 (WNT-4).